A 660-amino-acid chain; its full sequence is DNA mismatch repair protein MutL (660 aa).

Belongs to the DNA mismatch repair MutL/HexB family.

In terms of biological role, this protein is involved in the repair of mismatches in DNA. It is required for dam-dependent methyl-directed DNA mismatch repair. May act as a 'molecular matchmaker', a protein that promotes the formation of a stable complex between two or more DNA-binding proteins in an ATP-dependent manner without itself being part of a final effector complex. The sequence is that of DNA mismatch repair protein MutL from Streptococcus pyogenes serotype M3 (strain ATCC BAA-595 / MGAS315).